Consider the following 337-residue polypeptide: Holliday junction branch migration complex subunit RuvB (337 aa).

The interval 1-179 (MTHQVAVLHQ…FAFSARLSYY (179 aa)) is large ATPase domain (RuvB-L). ATP-binding positions include L18, R19, G60, K63, T64, S65, 126 to 128 (EDF), R169, Y179, and R216. T64 contributes to the Mg(2+) binding site. The tract at residues 180–250 (SDQDLKEILV…VAEKALAMLL (71 aa)) is small ATPAse domain (RuvB-S). Residues 253 to 337 (DWGLNEIDIK…KNLLSLGEGQ (85 aa)) are head domain (RuvB-H). The DNA site is built by K308 and R313.

It belongs to the RuvB family. In terms of assembly, homohexamer. Forms an RuvA(8)-RuvB(12)-Holliday junction (HJ) complex. HJ DNA is sandwiched between 2 RuvA tetramers; dsDNA enters through RuvA and exits via RuvB. An RuvB hexamer assembles on each DNA strand where it exits the tetramer. Each RuvB hexamer is contacted by two RuvA subunits (via domain III) on 2 adjacent RuvB subunits; this complex drives branch migration. In the full resolvosome a probable DNA-RuvA(4)-RuvB(12)-RuvC(2) complex forms which resolves the HJ.

Its subcellular location is the cytoplasm. The catalysed reaction is ATP + H2O = ADP + phosphate + H(+). Its function is as follows. The RuvA-RuvB-RuvC complex processes Holliday junction (HJ) DNA during genetic recombination and DNA repair, while the RuvA-RuvB complex plays an important role in the rescue of blocked DNA replication forks via replication fork reversal (RFR). RuvA specifically binds to HJ cruciform DNA, conferring on it an open structure. The RuvB hexamer acts as an ATP-dependent pump, pulling dsDNA into and through the RuvAB complex. RuvB forms 2 homohexamers on either side of HJ DNA bound by 1 or 2 RuvA tetramers; 4 subunits per hexamer contact DNA at a time. Coordinated motions by a converter formed by DNA-disengaged RuvB subunits stimulates ATP hydrolysis and nucleotide exchange. Immobilization of the converter enables RuvB to convert the ATP-contained energy into a lever motion, pulling 2 nucleotides of DNA out of the RuvA tetramer per ATP hydrolyzed, thus driving DNA branch migration. The RuvB motors rotate together with the DNA substrate, which together with the progressing nucleotide cycle form the mechanistic basis for DNA recombination by continuous HJ branch migration. Branch migration allows RuvC to scan DNA until it finds its consensus sequence, where it cleaves and resolves cruciform DNA. In Chlamydia pneumoniae (Chlamydophila pneumoniae), this protein is Holliday junction branch migration complex subunit RuvB.